Consider the following 148-residue polypeptide: Large ribosomal subunit protein bL9 (148 aa).

This sequence belongs to the bacterial ribosomal protein bL9 family.

Its function is as follows. Binds to the 23S rRNA. This chain is Large ribosomal subunit protein bL9, found in Geobacter sulfurreducens (strain ATCC 51573 / DSM 12127 / PCA).